Here is a 1052-residue protein sequence, read N- to C-terminus: Membrane-bound transcription factor site-1 protease (1052 aa).

The signal sequence occupies residues 1–17; it reads MKLVNIWLLLLVVLLCG. The propeptide occupies 18 to 186; that stretch reads KKHLGDRLGK…TGRHSSRRLL (169 aa). N-linked (GlcNAc...) asparagine glycosylation is present at asparagine 148. A Phosphoserine modification is found at serine 168. Over 187–999 the chain is Lumenal; sequence RAIPRQVAQT…MPGRYNQEVG (813 aa). Residues 190–472 enclose the Peptidase S8 domain; the sequence is PRQVAQTLQA…HGKLDLLRAY (283 aa). Aspartate 218 (charge relay system) is an active-site residue. N-linked (GlcNAc...) asparagine glycosylation occurs at asparagine 236. Histidine 249 (charge relay system) is an active-site residue. Asparagine 305 is a glycosylation site (N-linked (GlcNAc...) asparagine). The active-site Charge relay system is the serine 414. Asparagine 515 and asparagine 728 each carry an N-linked (GlcNAc...) asparagine glycan. The segment covering 877 to 887 has biased composition (polar residues); it reads PSLSHSGNRQR. A disordered region spans residues 877-900; that stretch reads PSLSHSGNRQRPPSGAGLAPPERM. Asparagine 939 carries an N-linked (GlcNAc...) asparagine glycan. Residues 1000-1022 traverse the membrane as a helical segment; that stretch reads QTIPVFAFLGAMVALAFFVVQIS. Over 1023-1052 the chain is Cytoplasmic; sequence KAKSRPKRRRPRAKRPQLAQQAHPARTPSV. The segment covering 1026 to 1037 has biased composition (basic residues); the sequence is SRPKRRRPRAKR. The segment at 1026 to 1052 is disordered; that stretch reads SRPKRRRPRAKRPQLAQQAHPARTPSV.

Belongs to the peptidase S8 family. In terms of assembly, interacts with LYSET; this interaction bridges GNPTAB to MBTPS1. Ca(2+) serves as cofactor. Post-translationally, the 148 kDa zymogen is processed progressively into two membrane-bound 120 and 106 kDa forms in the endoplasmic reticulum, and late into a secreted 98 kDa form. The propeptide is autocatalytically removed through an intramolecular cleavage after Leu-186. Further cleavage generates 14, 10, and 8 kDa intermediates. As to expression, widely expressed. In adult rat, highly expressed in anterior pituitary, thyroid and adrenal glands and in liver. In 2-day old rat, detected in developing skin, striated muscles, cardiac muscles, bones, teeth and internal organs. Highly expressed in retina, cerebellum, pituitary, submaxillary, thyroid and adrenal glands, molars, thymus, kidney and intestine.

The protein localises to the endoplasmic reticulum membrane. It is found in the golgi apparatus membrane. The catalysed reaction is Processes precursors containing basic and hydrophobic/aliphatic residues at P4 and P2, respectively, with a relatively relaxed acceptance of amino acids at P1 and P3.. Inhibited by divalent copper and zinc ions, but not by nickel or cobalt. Inhibited by its prosegment, but not smaller fragments. Inhibited by 4-(2-aminoethyl)benzenesulfonyl fluoride (AEBSF), a serine protease inhibitor. Serine protease that cleaves after hydrophobic or small residues, provided that Arg or Lys is in position P4: known substrates include SREBF1/SREBP1, SREBF2/SREBP2, BDNF, GNPTAB, ATF6, ATF6B and FAM20C. Cleaves substrates after Arg-Ser-Val-Leu (SREBP2), Arg-His-Leu-Leu (ATF6), Arg-Gly-Leu-Thr (BDNF) and its own propeptide after Arg-Arg-Leu-Leu. Catalyzes the first step in the proteolytic activation of the sterol regulatory element-binding proteins (SREBPs) SREBF1/SREBP1 and SREBF2/SREBP2. Also mediates the first step in the proteolytic activation of the cyclic AMP-dependent transcription factor ATF-6 (ATF6 and ATF6B). Mediates the protein cleavage of GNPTAB into subunit alpha and beta, thereby participating in biogenesis of lysosomes. Cleaves the propeptide from FAM20C which is required for FAM20C secretion from the Golgi apparatus membrane and for enhancement of FAM20C kinase activity, promoting osteoblast differentiation and biomineralization. Involved in the regulation of M6P-dependent Golgi-to-lysosome trafficking of lysosomal enzymes. It is required for the activation of CREB3L2/BBF2H7, a transcriptional activator of MIA3/TANGO and other genes controlling mega vesicle formation. Therefore, it plays a key role in the regulation of mega vesicle-mediated collagen trafficking. In astrocytes and osteoblasts, upon DNA damage and ER stress, mediates the first step of the regulated intramembrane proteolytic activation of the transcription factor CREB3L1, leading to the inhibition of cell-cycle progression. The chain is Membrane-bound transcription factor site-1 protease (Mbtps1) from Rattus norvegicus (Rat).